A 916-amino-acid polypeptide reads, in one-letter code: Isoleucine--tRNA ligase (916 aa).

The 'HIGH' region signature appears at 57-67 (PYANGNLHMGH). Residue E554 participates in L-isoleucyl-5'-AMP binding. The 'KMSKS' region signature appears at 595 to 599 (KMSKS). K598 serves as a coordination point for ATP. Zn(2+) contacts are provided by C885, C888, C905, and C908.

This sequence belongs to the class-I aminoacyl-tRNA synthetase family. IleS type 1 subfamily. As to quaternary structure, monomer. The cofactor is Zn(2+).

It is found in the cytoplasm. The enzyme catalyses tRNA(Ile) + L-isoleucine + ATP = L-isoleucyl-tRNA(Ile) + AMP + diphosphate. Its function is as follows. Catalyzes the attachment of isoleucine to tRNA(Ile). As IleRS can inadvertently accommodate and process structurally similar amino acids such as valine, to avoid such errors it has two additional distinct tRNA(Ile)-dependent editing activities. One activity is designated as 'pretransfer' editing and involves the hydrolysis of activated Val-AMP. The other activity is designated 'posttransfer' editing and involves deacylation of mischarged Val-tRNA(Ile). This Staphylococcus saprophyticus subsp. saprophyticus (strain ATCC 15305 / DSM 20229 / NCIMB 8711 / NCTC 7292 / S-41) protein is Isoleucine--tRNA ligase.